We begin with the raw amino-acid sequence, 226 residues long: 2-C-methyl-D-erythritol 4-phosphate cytidylyltransferase (226 aa).

It belongs to the IspD/TarI cytidylyltransferase family. IspD subfamily.

It catalyses the reaction 2-C-methyl-D-erythritol 4-phosphate + CTP + H(+) = 4-CDP-2-C-methyl-D-erythritol + diphosphate. It participates in isoprenoid biosynthesis; isopentenyl diphosphate biosynthesis via DXP pathway; isopentenyl diphosphate from 1-deoxy-D-xylulose 5-phosphate: step 2/6. Its function is as follows. Catalyzes the formation of 4-diphosphocytidyl-2-C-methyl-D-erythritol from CTP and 2-C-methyl-D-erythritol 4-phosphate (MEP). This is 2-C-methyl-D-erythritol 4-phosphate cytidylyltransferase from Thermosipho africanus (strain TCF52B).